The sequence spans 837 residues: Ubiquitin carboxyl-terminal hydrolase A (837 aa).

A UBP-type; degenerate zinc finger spans residues 166-277 (PSAFAESIIQ…QHLTHWGLNP (112 aa)). In terms of domain architecture, USP spans 319–835 (TGIENLGNSC…LGYIYFYKRQ (517 aa)). C328 serves as the catalytic Nucleophile. Residues 628 to 669 (SFNQEVLDTLLSMDFPLVRCKKALLATGGKDAELAMNWIFEH) enclose the UBA 1 domain. Residues 676 to 695 (DIEQTPVNNNNNNNNSSNSN) are disordered. Residues 683 to 695 (NNNNNNNNSSNSN) are compositionally biased toward low complexity. Residues 700-740 (VFNSQDVDNIIGMGFTDSQAKLALKNTKGNLERAADWLFSH) enclose the UBA 2 domain. The active-site Proton acceptor is H797.

The protein belongs to the peptidase C19 family.

The enzyme catalyses Thiol-dependent hydrolysis of ester, thioester, amide, peptide and isopeptide bonds formed by the C-terminal Gly of ubiquitin (a 76-residue protein attached to proteins as an intracellular targeting signal).. Its function is as follows. Required for development but not growth. The polypeptide is Ubiquitin carboxyl-terminal hydrolase A (ubpA) (Dictyostelium discoideum (Social amoeba)).